The following is a 581-amino-acid chain: Proline--tRNA ligase (581 aa).

This sequence belongs to the class-II aminoacyl-tRNA synthetase family. ProS type 1 subfamily. As to quaternary structure, homodimer.

It localises to the cytoplasm. It carries out the reaction tRNA(Pro) + L-proline + ATP = L-prolyl-tRNA(Pro) + AMP + diphosphate. In terms of biological role, catalyzes the attachment of proline to tRNA(Pro) in a two-step reaction: proline is first activated by ATP to form Pro-AMP and then transferred to the acceptor end of tRNA(Pro). As ProRS can inadvertently accommodate and process non-cognate amino acids such as alanine and cysteine, to avoid such errors it has two additional distinct editing activities against alanine. One activity is designated as 'pretransfer' editing and involves the tRNA(Pro)-independent hydrolysis of activated Ala-AMP. The other activity is designated 'posttransfer' editing and involves deacylation of mischarged Ala-tRNA(Pro). The misacylated Cys-tRNA(Pro) is not edited by ProRS. The sequence is that of Proline--tRNA ligase from Rhodococcus erythropolis (strain PR4 / NBRC 100887).